The primary structure comprises 197 residues: Negative modulator of initiation of replication (197 aa).

The protein belongs to the SeqA family. In terms of assembly, homodimer. Polymerizes to form helical filaments.

It is found in the cytoplasm. Functionally, negative regulator of replication initiation, which contributes to regulation of DNA replication and ensures that replication initiation occurs exactly once per chromosome per cell cycle. Binds to pairs of hemimethylated GATC sequences in the oriC region, thus preventing assembly of replication proteins and re-initiation at newly replicated origins. Repression is relieved when the region becomes fully methylated. The protein is Negative modulator of initiation of replication of Pseudoalteromonas translucida (strain TAC 125).